We begin with the raw amino-acid sequence, 33 residues long: Protamine TP14 (33 aa).

Residues M1 to R33 are disordered.

In terms of tissue distribution, testis.

It localises to the nucleus. The protein localises to the chromosome. Protamines substitute for histones in the chromatin of sperm during the haploid phase of spermatogenesis. They compact sperm DNA into a highly condensed, stable and inactive complex. This chain is Protamine TP14, found in Oncorhynchus mykiss (Rainbow trout).